Consider the following 606-residue polypeptide: Electron transfer flavoprotein-ubiquinone oxidoreductase, mitochondrial (606 aa).

Position 59–73 (59–73 (VVIVGAGPSGLSTAI)) interacts with FAD. Residues 448–468 (PSLHWGTIPGLIYGALEMYIF) traverse the membrane as a helical segment. Cys551, Cys575, Cys578, and Cys581 together coordinate [4Fe-4S] cluster.

The protein belongs to the ETF-QO/FixC family. Monomer. [4Fe-4S] cluster serves as cofactor. Requires FAD as cofactor.

It is found in the mitochondrion inner membrane. It carries out the reaction a ubiquinone + reduced [electron-transfer flavoprotein] = a ubiquinol + oxidized [electron-transfer flavoprotein] + H(+). In terms of biological role, accepts electrons from ETF and reduces ubiquinone. The sequence is that of Electron transfer flavoprotein-ubiquinone oxidoreductase, mitochondrial (etfdh) from Dictyostelium discoideum (Social amoeba).